Reading from the N-terminus, the 279-residue chain is Urease accessory protein UreD (279 aa).

This sequence belongs to the UreD family. UreD, UreF and UreG form a complex that acts as a GTP-hydrolysis-dependent molecular chaperone, activating the urease apoprotein by helping to assemble the nickel containing metallocenter of UreC. The UreE protein probably delivers the nickel.

It localises to the cytoplasm. In terms of biological role, required for maturation of urease via the functional incorporation of the urease nickel metallocenter. This chain is Urease accessory protein UreD, found in Paracoccus denitrificans (strain Pd 1222).